The following is a 71-amino-acid chain: Conotoxin TxMMSK-05 (71 aa).

An N-terminal signal peptide occupies residues 1–20 (MMSKLGALLIICLLLFPLTA). A propeptide spanning residues 21 to 52 (VPLDGDQHADRPAERLQDDISSKHHPMFDAVR) is cleaved from the precursor. 3 disulfides stabilise this stretch: C54-C70, C55-C66, and C60-C69.

This sequence belongs to the conotoxin M superfamily. As to expression, expressed by the venom duct.

The protein resides in the secreted. The polypeptide is Conotoxin TxMMSK-05 (Conus textile (Cloth-of-gold cone)).